Consider the following 371-residue polypeptide: AA9 family lytic polysaccharide monooxygenase B (371 aa).

The N-terminal stretch at 1-25 (MSIAKIAGVVLGSAALVAGHGYVSG) is a signal peptide. Cu(2+) contacts are provided by His-20 and His-104. Cystine bridges form between Cys-74-Cys-194 and Cys-115-Cys-119. An N-linked (GlcNAc...) asparagine glycan is attached at Asn-154. 2 residues coordinate O2: His-180 and Gln-189. Cu(2+) is bound at residue Tyr-191. The disordered stretch occupies residues 304 to 332 (HVQATSSSAAASTPTASSGASSGSGSSSS). Low complexity predominate over residues 307 to 332 (ATSSSAAASTPTASSGASSGSGSSSS).

Belongs to the polysaccharide monooxygenase AA9 family. Cu(2+) serves as cofactor.

It is found in the secreted. It carries out the reaction [(1-&gt;4)-beta-D-glucosyl]n+m + reduced acceptor + O2 = 4-dehydro-beta-D-glucosyl-[(1-&gt;4)-beta-D-glucosyl]n-1 + [(1-&gt;4)-beta-D-glucosyl]m + acceptor + H2O.. Its function is as follows. Lytic polysaccharide monooxygenase (LPMO) that depolymerizes crystalline and amorphous polysaccharides via the oxidation of scissile alpha- or beta-(1-4)-glycosidic bonds, yielding C1 and C4 oxidation products. Catalysis by LPMOs requires the reduction of the active-site copper from Cu(II) to Cu(I) by a reducing agent and H(2)O(2) or O(2) as a cosubstrate. In addition to cellulose, also cleaves the beta-(1!4)-glucan backbone of tamarind xyloglucan, irrespective of substitutions which contrasts with AA9A xyloglucan cleavage activity. The sequence is that of AA9 family lytic polysaccharide monooxygenase B from Aspergillus tamarii.